Consider the following 176-residue polypeptide: ATP-dependent protease subunit HslV (176 aa).

Residue threonine 5 is part of the active site. Residues glycine 161, cysteine 164, and threonine 167 each contribute to the Na(+) site.

The protein belongs to the peptidase T1B family. HslV subfamily. A double ring-shaped homohexamer of HslV is capped on each side by a ring-shaped HslU homohexamer. The assembly of the HslU/HslV complex is dependent on binding of ATP.

It is found in the cytoplasm. It catalyses the reaction ATP-dependent cleavage of peptide bonds with broad specificity.. Allosterically activated by HslU binding. In terms of biological role, protease subunit of a proteasome-like degradation complex believed to be a general protein degrading machinery. This Wolinella succinogenes (strain ATCC 29543 / DSM 1740 / CCUG 13145 / JCM 31913 / LMG 7466 / NCTC 11488 / FDC 602W) (Vibrio succinogenes) protein is ATP-dependent protease subunit HslV.